Reading from the N-terminus, the 465-residue chain is Mothers against decapentaplegic homolog 5 (465 aa).

Position 2 is an N-acetylthreonine (threonine 2). The MH1 domain maps to 13 to 137 (PAVKRLLGWK…YKRVESPVLP (125 aa)). Zn(2+) is bound by residues cysteine 65, cysteine 110, cysteine 122, and histidine 127. Positions 163-249 (NEPHMPQNAT…PMDTSNNMIP (87 aa)) are disordered. Polar residues predominate over residues 169–182 (QNATFPDSFHQPNN). Positions 186–197 (PLSPNSPYPPSP) are enriched in pro residues. The span at 198-214 (ASSTYPNSPASSGPGSP) shows a compositional bias: low complexity. Positions 234-249 (GQDNSQPMDTSNNMIP) are enriched in polar residues. The 195-residue stretch at 271-465 (WCSIVYYELN…SPLNPISSVS (195 aa)) folds into the MH2 domain. Phosphoserine occurs at positions 463 and 465.

This sequence belongs to the dwarfin/SMAD family. As to quaternary structure, homodimer. Forms trimers with the co-SMAD SMAD4. Interacts with PEBP2-alpha subunit and SMURF1. Interacts with SUV39H1 and SUV39H2. Interacts (via MH2 domain) with LEMD3. Interacts with WWP1. Interacts with TMEM119. Interacts with ZNF8. Interacts with RANBP3L. Interacts with HK1. Interacts with HGS; this interaction attenuates BMP signaling. Post-translationally, phosphorylated on serine by BMP (bone morphogenetic proteins) type 1 receptor kinase. In terms of processing, ubiquitin-mediated proteolysis by SMAD-specific E3 ubiquitin ligase SMURF1. In terms of tissue distribution, ubiquitous.

It is found in the cytoplasm. It localises to the nucleus. The protein resides in the mitochondrion. Transcriptional regulator that plays a role in various cellular processes including embryonic development, cell differentiation, angiogenesis and tissue homeostasis. Upon BMP ligand binding to their receptors at the cell surface, is phosphorylated by activated type I BMP receptors (BMPRIs) and associates with SMAD4 to form a heteromeric complex which translocates into the nucleus acting as transcription factor. In turn, the hetero-trimeric complex recognizes cis-regulatory elements containing Smad Binding Elements (SBEs) to modulate the outcome of the signaling network. Non-phosphorylated SMAD5 has a cytoplasmic role in energy metabolism regulation by promoting mitochondrial respiration and glycolysis in response to cytoplasmic pH changes. Mechanistically, interacts with hexokinase 1/HK1 and thereby accelerates glycolysis. The polypeptide is Mothers against decapentaplegic homolog 5 (SMAD5) (Homo sapiens (Human)).